A 3164-amino-acid polypeptide reads, in one-letter code: Large tegument protein deneddylase (3164 aa).

A deubiquitination activity region spans residues 1-273 (MGGGNNTNPG…SETYLQDEAF (273 aa)). A Peptidase C76 domain is found at 45–263 (VVTGARNQFA…TAAALHLYGA (219 aa)). Residues C65, D197, and H199 contribute to the active site. Residues 289–508 (AGLGEPCVGV…GEDDGPTVPA (220 aa)) are disordered. A compositionally biased stretch (pro residues) spans 308–321 (GPHPPTAAQSPPPT). The span at 343 to 353 (PEAKRPNRAPD) shows a compositional bias: basic and acidic residues. A compositionally biased stretch (pro residues) spans 365–390 (PTDPPSADPPSADPPSAIPPPPPSAP). The segment covering 416-432 (GRHRARYSAGLPKRRRP) has biased composition (basic residues). The nuclear localization signal stretch occupies residues 426–432 (LPKRRRP). The tract at residues 579-609 (LELCVIFFFERVLAFLIENGARTHTQAGVAG) is interaction with inner tegument protein. An interaction with UL37 region spans residues 579–609 (LELCVIFFFERVLAFLIENGARTHTQAGVAG). Disordered regions lie at residues 2296-2318 (QTLS…LYRP), 2518-2552 (HPVY…LGPG), and 2583-3020 (ASDD…SLSG). Residues 2653-2667 (QSSPAPPDATAPRPP) show a composition bias toward pro residues. Low complexity predominate over residues 2668–2680 (ASSRASAASSSGS). The span at 2681–2690 (RARRHRRARS) shows a compositional bias: basic residues. Over residues 2722 to 2732 (PPAPPKPPEPA) the composition is skewed to pro residues. Low complexity predominate over residues 2834–2843 (PAEPTSSSPA). Residues 2844–2866 (GPSPPPPAVQPVAPPPTSGPPPT) show a composition bias toward pro residues. The segment covering 2886–2897 (TRQPVATPTTSA) has biased composition (polar residues). 35 repeat units span residues 2911 to 2912 (PQ), 2913 to 2914 (PQ), 2915 to 2916 (PQ), 2917 to 2918 (PQ), 2919 to 2920 (PQ), 2921 to 2922 (PQ), 2923 to 2924 (PQ), 2925 to 2926 (PQ), 2927 to 2928 (PQ), 2929 to 2930 (PQ), 2931 to 2932 (PQ), 2933 to 2934 (PQ), 2935 to 2936 (PQ), 2937 to 2938 (PQ), 2939 to 2940 (PQ), 2941 to 2942 (PQ), 2943 to 2944 (PQ), 2945 to 2946 (PQ), 2947 to 2948 (PQ), 2949 to 2950 (PQ), 2951 to 2952 (PQ), 2953 to 2954 (PQ), 2955 to 2956 (PQ), 2957 to 2958 (PQ), 2959 to 2960 (PQ), 2961 to 2962 (PQ), 2963 to 2964 (PQ), 2965 to 2966 (PQ), 2967 to 2968 (PQ), 2969 to 2970 (PQ), 2971 to 2972 (PQ), 2973 to 2974 (PQ), 2975 to 2976 (PQ), 2977 to 2978 (PQ), and 2979 to 2980 (PQ). The interval 2911 to 2980 (PQPQPQPQPQ…PQPQPQPQPQ (70 aa)) is 35 X 2 AA tandem repeats of P-Q. Pro residues predominate over residues 2912–2978 (QPQPQPQPQP…PQPQPQPQPQ (67 aa)). Residues 2999-3014 (NRPSVPASASSTNPRT) show a composition bias toward polar residues.

This sequence belongs to the herpesviridae large tegument protein family. Interacts with host CUL1 and CUL4A; these interactions inhibit the E3 ligase activity of cullins. Interacts with inner tegument protein. Interacts with capsid vertex specific component CVC2. Interacts with the major capsid protein/MCP. Interacts with VP16; this interaction is important for outer tegument association to the capsid. May form homodimers. In terms of processing, proteolytically processed, possibly into several polypeptides. Enzymatic activity is only detectable following cleavage of the UL36 protein, which occurs late during viral replication.

It localises to the virion tegument. The protein localises to the host cytoplasm. Its subcellular location is the host nucleus. The enzyme catalyses Thiol-dependent hydrolysis of ester, thioester, amide, peptide and isopeptide bonds formed by the C-terminal Gly of ubiquitin (a 76-residue protein attached to proteins as an intracellular targeting signal).. In terms of biological role, large tegument protein that plays multiple roles in the viral cycle. During viral entry, remains associated with the capsid while most of the tegument is detached and participates in the capsid transport toward the host nucleus. Plays a role in the routing of the capsid at the nuclear pore complex and subsequent uncoating. Within the host nucleus, acts as a deneddylase and promotes the degradation of nuclear CRLs (cullin-RING ubiquitin ligases) and thereby stabilizes nuclear CRL substrates, while cytoplasmic CRLs remain unaffected. These modifications prevent host cell cycle S-phase progression and create a favorable environment allowing efficient viral genome replication. Participates later in the secondary envelopment of capsids. Indeed, plays a linker role for the association of the outer viral tegument to the capsids together with the inner tegument protein. The chain is Large tegument protein deneddylase from Human herpesvirus 1 (strain 17) (HHV-1).